The following is a 466-amino-acid chain: 3-isopropylmalate dehydratase large subunit (466 aa).

[4Fe-4S] cluster is bound by residues C347, C407, and C410.

This sequence belongs to the aconitase/IPM isomerase family. LeuC type 1 subfamily. In terms of assembly, heterodimer of LeuC and LeuD. It depends on [4Fe-4S] cluster as a cofactor.

It catalyses the reaction (2R,3S)-3-isopropylmalate = (2S)-2-isopropylmalate. It participates in amino-acid biosynthesis; L-leucine biosynthesis; L-leucine from 3-methyl-2-oxobutanoate: step 2/4. Functionally, catalyzes the isomerization between 2-isopropylmalate and 3-isopropylmalate, via the formation of 2-isopropylmaleate. This chain is 3-isopropylmalate dehydratase large subunit, found in Vibrio vulnificus (strain YJ016).